The sequence spans 521 residues: FAD-dependent monooxygenase mdpD (521 aa).

The tract at residues 1–48 (MTHFPVNIASDKQEFDPERWAKTPTTESSVNGENGTAPTSGLPSRHPS) is disordered. Positions 11–21 (DKQEFDPERWA) are enriched in basic and acidic residues. Over residues 23-48 (TPTTESSVNGENGTAPTSGLPSRHPS) the composition is skewed to polar residues. 2 residues coordinate FAD: valine 94 and arginine 160. Residues arginine 244 and tyrosine 271 contribute to the active site. Residues aspartate 369 and glycine 382 each coordinate FAD.

The protein belongs to the paxM FAD-dependent monooxygenase family. Requires FAD as cofactor.

It participates in secondary metabolite biosynthesis. Functionally, FAD-dependent monooxygenase; part of the gene cluster that mediates the biosynthesis of monodictyphenone, a prenyl xanthone derivative. The pathway begins with the synthesis of atrochrysone thioester by the polyketide synthase (PKS) mdpG. The atrochrysone carboxyl ACP thioesterase mdpF then breaks the thioester bond and releases the atrochrysone carboxylic acid from mdpG. The atrochrysone carboxylic acid is then converted to atrochrysone which is further transformed into emodin anthrone. The next step is performed by the anthrone oxygenase mdpH that catalyzes the oxidation of emodinanthrone to emodin. Emodin is further modified to yield monodictyphenone via several steps involving mdpB, mdpC mdpJ, mdpK and mdpL. These enzymes with xptA, xptB and xptC are also proposed to be involved in the synthesis of shamixanthone from emodin. Especially, direct reduction of emodin by the short chain dehydrogenase mdpC followed by dehydration catalyzed by the scytalone dehydratase-like protein mdpB gives loss of oxygen and formation of chrysophanol intermediate in two simple steps. The protein is FAD-dependent monooxygenase mdpD of Emericella nidulans (strain FGSC A4 / ATCC 38163 / CBS 112.46 / NRRL 194 / M139) (Aspergillus nidulans).